The chain runs to 349 residues: Isopentenyl-diphosphate delta-isomerase (349 aa).

Arginine 6–lysine 7 contacts substrate. FMN is bound by residues alanine 62–threonine 64, serine 93, and asparagine 122. Glutamine 152 contributes to the substrate binding site. Residue glutamate 153 coordinates Mg(2+). FMN is bound by residues lysine 184, threonine 214, glycine 258–glycine 259, and alanine 280–glycine 281.

This sequence belongs to the IPP isomerase type 2 family. Homooctamer. Dimer of tetramers. FMN serves as cofactor. Requires NADPH as cofactor. It depends on Mg(2+) as a cofactor.

The protein resides in the cytoplasm. The enzyme catalyses isopentenyl diphosphate = dimethylallyl diphosphate. Its function is as follows. Involved in the biosynthesis of isoprenoids. Catalyzes the 1,3-allylic rearrangement of the homoallylic substrate isopentenyl (IPP) to its allylic isomer, dimethylallyl diphosphate (DMAPP). The polypeptide is Isopentenyl-diphosphate delta-isomerase (Bacillus cereus (strain ATCC 10987 / NRS 248)).